The sequence spans 642 residues: 1-deoxy-D-xylulose-5-phosphate synthase 2 (642 aa).

Residues H73 and 113–115 (SHA) each bind thiamine diphosphate. D144 contacts Mg(2+). Thiamine diphosphate-binding positions include 145–146 (GA), N174, Y285, and E366. N174 provides a ligand contact to Mg(2+).

This sequence belongs to the transketolase family. DXPS subfamily. Homodimer. Mg(2+) is required as a cofactor. The cofactor is thiamine diphosphate.

It carries out the reaction D-glyceraldehyde 3-phosphate + pyruvate + H(+) = 1-deoxy-D-xylulose 5-phosphate + CO2. It functions in the pathway metabolic intermediate biosynthesis; 1-deoxy-D-xylulose 5-phosphate biosynthesis; 1-deoxy-D-xylulose 5-phosphate from D-glyceraldehyde 3-phosphate and pyruvate: step 1/1. Catalyzes the acyloin condensation reaction between C atoms 2 and 3 of pyruvate and glyceraldehyde 3-phosphate to yield 1-deoxy-D-xylulose-5-phosphate (DXP). The protein is 1-deoxy-D-xylulose-5-phosphate synthase 2 of Streptomyces avermitilis (strain ATCC 31267 / DSM 46492 / JCM 5070 / NBRC 14893 / NCIMB 12804 / NRRL 8165 / MA-4680).